Here is a 205-residue protein sequence, read N- to C-terminus: MGQKTHPVGFRLGITHTHQSHWFAHQYSKILQEDHAIRQLLRDYVLKAGIARIHILRKSHQIELELHLARPGILVGRSGLGLDNLRTQLQTKWPHLTWRISLVEVSNPDANAVLLAQWLAQQLEKRIAFRRAIRQAMARAQKVGVKGIKIQVSGRLNGAEIARSEWVRHGQIPLQTLRAPINYAIANAYTTYGVIGVKVWINPKH.

The region spanning 37–106 (IRQLLRDYVL…TWRISLVEVS (70 aa)) is the KH type-2 domain.

This sequence belongs to the universal ribosomal protein uS3 family. In terms of assembly, part of the 30S ribosomal subunit.

The protein localises to the plastid. Its subcellular location is the chloroplast. The protein is Small ribosomal subunit protein uS3c (rps3) of Cyanidioschyzon merolae (strain NIES-3377 / 10D) (Unicellular red alga).